Here is a 268-residue protein sequence, read N- to C-terminus: MTLLNVSGLSHHYAHGGFSGKHQHQAVLNNVSLTLKSGETVALLGRSGCGKSTLARLLVGLESPSQGNISWRGESLAKLNRAQRKAFRRDIQMVFQDSISAVNPRKTVREILREPMRHLLSLKKSEQLARASEMLKAVDLDDSVLDKRPPQLSGGQLQRVCLARALAVEPKLLILDETVSNLDLVLQAGVIRLLKKLQQQFGTACLFITHDLRLVERFCQRVMVMDNGQIVETQAVGDKLTFSSDAGRVLQNAVLPAFPVRRRATEKV.

Residues 4 to 252 enclose the ABC transporter domain; sequence LNVSGLSHHY…SSDAGRVLQN (249 aa). 45–52 serves as a coordination point for ATP; the sequence is GRSGCGKS.

It belongs to the ABC transporter superfamily. Nickel importer (TC 3.A.1.5.3) family. In terms of assembly, the complex is composed of two ATP-binding proteins (NikD and NikE), two transmembrane proteins (NikB and NikC) and a solute-binding protein (NikA).

It localises to the cell inner membrane. The enzyme catalyses Ni(2+)(out) + ATP + H2O = Ni(2+)(in) + ADP + phosphate + H(+). In terms of biological role, part of the ABC transporter complex NikABCDE involved in nickel import. Responsible for energy coupling to the transport system. This Shigella boydii serotype 4 (strain Sb227) protein is Nickel import ATP-binding protein NikE.